The chain runs to 49 residues: Large ribosomal subunit protein bL33 (49 aa).

This sequence belongs to the bacterial ribosomal protein bL33 family.

In Nitratidesulfovibrio vulgaris (strain ATCC 29579 / DSM 644 / CCUG 34227 / NCIMB 8303 / VKM B-1760 / Hildenborough) (Desulfovibrio vulgaris), this protein is Large ribosomal subunit protein bL33.